The sequence spans 513 residues: Cytochrome P450 1A2 (513 aa).

S68 is a glycosylation site (O-linked (GlcNAc) serine). Position 456 (C456) interacts with heme.

This sequence belongs to the cytochrome P450 family. As to quaternary structure, interacts with PGRMC1; the interaction requires PGRMC1 homodimerization. It depends on heme as a cofactor.

Its subcellular location is the endoplasmic reticulum membrane. It is found in the microsome membrane. It catalyses the reaction an organic molecule + reduced [NADPH--hemoprotein reductase] + O2 = an alcohol + oxidized [NADPH--hemoprotein reductase] + H2O + H(+). The enzyme catalyses 17beta-estradiol + reduced [NADPH--hemoprotein reductase] + O2 = 2-hydroxy-17beta-estradiol + oxidized [NADPH--hemoprotein reductase] + H2O + H(+). The catalysed reaction is 17beta-estradiol + reduced [NADPH--hemoprotein reductase] + O2 = 4-hydroxy-17beta-estradiol + oxidized [NADPH--hemoprotein reductase] + H2O + H(+). It carries out the reaction estrone + reduced [NADPH--hemoprotein reductase] + O2 = 2-hydroxyestrone + oxidized [NADPH--hemoprotein reductase] + H2O + H(+). It catalyses the reaction estrone + reduced [NADPH--hemoprotein reductase] + O2 = 4-hydroxyestrone + oxidized [NADPH--hemoprotein reductase] + H2O + H(+). The enzyme catalyses cholesterol + reduced [NADPH--hemoprotein reductase] + O2 = 25-hydroxycholesterol + oxidized [NADPH--hemoprotein reductase] + H2O + H(+). The catalysed reaction is all-trans-retinol + reduced [NADPH--hemoprotein reductase] + O2 = all-trans-retinal + oxidized [NADPH--hemoprotein reductase] + 2 H2O + H(+). It carries out the reaction all-trans-retinal + reduced [NADPH--hemoprotein reductase] + O2 = all-trans-retinoate + oxidized [NADPH--hemoprotein reductase] + H2O + 2 H(+). It catalyses the reaction (5Z,8Z,11Z,14Z)-eicosatetraenoate + reduced [NADPH--hemoprotein reductase] + O2 = (14R,15S)-epoxy-(5Z,8Z,11Z)-eicosatrienoate + oxidized [NADPH--hemoprotein reductase] + H2O + H(+). The enzyme catalyses (5Z,8Z,11Z,14Z)-eicosatetraenoate + reduced [NADPH--hemoprotein reductase] + O2 = (14S,15R)-epoxy-(5Z,8Z,11Z)-eicosatrienoate + oxidized [NADPH--hemoprotein reductase] + H2O + H(+). The catalysed reaction is (5Z,8Z,11Z,14Z,17Z)-eicosapentaenoate + reduced [NADPH--hemoprotein reductase] + O2 = (17R,18S)-epoxy-(5Z,8Z,11Z,14Z)-eicosatetraenoate + oxidized [NADPH--hemoprotein reductase] + H2O + H(+). It carries out the reaction (4Z,7Z,10Z,13Z,16Z,19Z)-docosahexaenoate + reduced [NADPH--hemoprotein reductase] + O2 = (19R,20S)-epoxy-(4Z,7Z,10Z,13Z,16Z)-docosapentaenoate + oxidized [NADPH--hemoprotein reductase] + H2O + H(+). It catalyses the reaction (5S)-hydroperoxy-(6E,8Z,11Z,14Z)-eicosatetraenoate = 5-oxo-(6E,8Z,11Z,14Z)-eicosatetraenoate + H2O. The enzyme catalyses (12S)-hydroperoxy-(5Z,8Z,10E,14Z)-eicosatetraenoate = 12-oxo-(5Z,8Z,10E,14Z)-eicosatetraenoate + H2O. The catalysed reaction is (15S)-hydroperoxy-(5Z,8Z,11Z,13E)-eicosatetraenoate = 15-oxo-(5Z,8Z,11Z,13E)-eicosatetraenoate + H2O. It carries out the reaction (13S)-hydroperoxy-(9Z,11E)-octadecadienoate = 13-oxo-(9Z,11E)-octadecadienoate + H2O. It catalyses the reaction (5Z,8Z,11Z,14Z)-eicosatetraenoate + reduced [NADPH--hemoprotein reductase] + O2 = 13-hydroxy-(5Z,8Z,11Z,14Z)-eicosatetraenoate + oxidized [NADPH--hemoprotein reductase] + H2O + H(+). The enzyme catalyses (5Z,8Z,11Z,14Z)-eicosatetraenoate + reduced [NADPH--hemoprotein reductase] + O2 = 19-hydroxy-(5Z,8Z,11Z,14Z)-eicosatetraenoate + oxidized [NADPH--hemoprotein reductase] + H2O + H(+). The catalysed reaction is (9Z,12Z)-octadecadienoate + reduced [NADPH--hemoprotein reductase] + O2 = 11-hydroxy-(9Z,12Z)-octadecadienoate + oxidized [NADPH--hemoprotein reductase] + H2O + H(+). It functions in the pathway cofactor metabolism; retinol metabolism. The protein operates within steroid metabolism; cholesterol metabolism. Its pathway is lipid metabolism; arachidonate metabolism. Functionally, a cytochrome P450 monooxygenase involved in the metabolism of various endogenous substrates, including fatty acids, steroid hormones and vitamins. Mechanistically, uses molecular oxygen inserting one oxygen atom into a substrate, and reducing the second into a water molecule, with two electrons provided by NADPH via cytochrome P450 reductase (NADPH--hemoprotein reductase). Catalyzes the hydroxylation of carbon-hydrogen bonds. Exhibits high catalytic activity for the formation of hydroxyestrogens from estrone (E1) and 17beta-estradiol (E2), namely 2-hydroxy E1 and E2. Metabolizes cholesterol toward 25-hydroxycholesterol, a physiological regulator of cellular cholesterol homeostasis. May act as a major enzyme for all-trans retinoic acid biosynthesis in the liver. Catalyzes two successive oxidative transformation of all-trans retinol to all-trans retinal and then to the active form all-trans retinoic acid. Primarily catalyzes stereoselective epoxidation of the last double bond of polyunsaturated fatty acids (PUFA), displaying a strong preference for the (R,S) stereoisomer. Catalyzes bisallylic hydroxylation and omega-1 hydroxylation of PUFA. May also participate in eicosanoids metabolism by converting hydroperoxide species into oxo metabolites (lipoxygenase-like reaction, NADPH-independent). Plays a role in the oxidative metabolism of xenobiotics. Catalyzes the N-hydroxylation of heterocyclic amines and the O-deethylation of phenacetin. Metabolizes caffeine via N3-demethylation. This is Cytochrome P450 1A2 (Cyp1a2) from Rattus norvegicus (Rat).